The following is a 564-amino-acid chain: MFS-type efflux pump LUC4 (564 aa).

Positions 1 to 15 (MGQSQDNTQLTTASP) are enriched in polar residues. The segment at 1–35 (MGQSQDNTQLTTASPQAEKDLSSNDNPPESEPAAP) is disordered. 5 consecutive transmembrane segments (helical) span residues 42–62 (WLVF…TSII), 78–98 (LYVW…PIFA), 108–128 (SLTL…GGAH), 141–161 (GVGG…MVSV), and 170–190 (IIGG…GAFA). The N-linked (GlcNAc...) asparagine glycan is linked to N192. Transmembrane regions (helical) follow at residues 197–217 (WIFY…IVFL), 236–256 (WGGS…LSWG), and 268–288 (LVPL…QGAP). N302 is a glycosylation site (N-linked (GlcNAc...) asparagine). Helical transmembrane passes span 308 to 328 (LFVI…FLPV), 343 to 363 (VMLF…GIFI), 371 to 391 (VWHF…TLLD), 404 to 424 (LLFG…ILAS), and 436 to 456 (AWTF…AAAF). A glycan (N-linked (GlcNAc...) asparagine) is linked at N461. Residues 512–532 (KLVWQVSIAFSVLGFVLAFLV) form a helical membrane-spanning segment.

The protein belongs to the major facilitator superfamily. TCR/Tet family.

The protein resides in the membrane. In terms of biological role, MFS-type efflux pump; part of the gene cluster that mediates the biosynthesis of the mycotoxin lucilactaene and the lucilactaene-related compound NG-391 that act as cell cycle inhibitors with potent growth inhibitory activity against malarial parasites, moderate growth inhibitory activity against cancer cells, and no activity against bacteria and fungi. In Fusarium sp, this protein is MFS-type efflux pump LUC4.